A 369-amino-acid polypeptide reads, in one-letter code: Histidinol-phosphate aminotransferase (369 aa).

At Lys222 the chain carries N6-(pyridoxal phosphate)lysine.

It belongs to the class-II pyridoxal-phosphate-dependent aminotransferase family. Histidinol-phosphate aminotransferase subfamily. In terms of assembly, homodimer. The cofactor is pyridoxal 5'-phosphate.

It catalyses the reaction L-histidinol phosphate + 2-oxoglutarate = 3-(imidazol-4-yl)-2-oxopropyl phosphate + L-glutamate. The protein operates within amino-acid biosynthesis; L-histidine biosynthesis; L-histidine from 5-phospho-alpha-D-ribose 1-diphosphate: step 7/9. This is Histidinol-phosphate aminotransferase from Halalkalibacterium halodurans (strain ATCC BAA-125 / DSM 18197 / FERM 7344 / JCM 9153 / C-125) (Bacillus halodurans).